The primary structure comprises 300 residues: Lysenin-related protein 3 (300 aa).

The N-terminal cap domain stretch occupies residues 12–35 (EEIEVDVVAVWKEGYVYENRGDTS). The beta-hairpin domain stretch occupies residues 36-109 (VEQKITMTKG…SQVIEHTVTI (74 aa)). An N-terminal cap domain region spans residues 110 to 158 (PPTSKFTRWKLNADVGGTDIEYMYLIDEVTPISVTQTIPQVIRSRAKIL). The C-terminal receptor-binding domain stretch occupies residues 159-299 (VGRQIHLGTT…EDKWILEVVN (141 aa)). 4 residues coordinate an N-(acyl)-sphingosylphosphocholine: Lys187, Ser229, Tyr235, and Tyr284. Cysteines 274 and 285 form a disulfide.

It belongs to the lysenin family. As to quaternary structure, binds to sphingomyelin as a monomer by using its C-terminal domain. Forms a nonamer when sphingomyelin/LRP-3 ratio is lower than ca 500. Oligomerization, but not binding, is influenced by the fluidity of sphingomyelin. Expressed by coelomocytes.

Its subcellular location is the secreted. The protein resides in the target cell membrane. Pore-forming toxin that specifically binds sphingomyelin in the plasma membrane of various cells. Has antibacterial and hemolytic activity. The protein is Lysenin-related protein 3 of Eisenia fetida (Red wiggler worm).